The chain runs to 237 residues: Eukaryotic translation initiation factor 4E-1 (237 aa).

The disordered stretch occupies residues 1 to 61 (MVVEDTQKSV…KPPAALARNP (61 aa)). A compositionally biased stretch (acidic residues) spans 25 to 44 (NNDDDDDDLEEGEIPVDGED). Over residues 47-58 (ATATTKPPAALA) the composition is skewed to low complexity. 2 EIF4G-binding regions span residues 62–65 (HPLE) and 72–108 (FDNP…NNIH). Residues 80 to 85 (KQAAWG), Lys-112, and 130 to 131 (WE) contribute to the mRNA site. Residues Cys-135 and Cys-173 are joined by a disulfide bond. An EIF4G-binding region spans residues 156–165 (YTLLAMIGEQ). MRNA-binding positions include 180–185 (RSRQDK) and 225–229 (KKLDR).

It belongs to the eukaryotic initiation factor 4E family. EIF4F is a multi-subunit complex, the composition of which varies with external and internal environmental conditions. It is composed of at least EIF4A, EIF4E and EIF4G. EIF4E is also known to interact with other partners. In higher plants two isoforms of EIF4F have been identified, named isoform EIF4F and isoform EIF(iso)4F. Isoform EIF4F has subunits p220 and p26, whereas isoform EIF(iso)4F has subunits p82 and p28. As to quaternary structure, (Microbial infection) Interacts with potyvirus viral genome-linked protein (VPg) in the nucleus; this interaction is possible in susceptible hosts but is impaired in resistant plants. Binds to soybean mosaic virus (SMV) VPg in the nucleus. Interacts with SMV nuclear inclusion protein A (NIa-Pro) and nuclear inclusion protein B (NIb) in the cytoplasm. Post-translationally, according to the redox status, the Cys-135-Cys-173 disulfide bridge may have a role in regulating protein function by affecting its ability to bind capped mRNA. Mostly expressed in roots, flowers, immature pods and mature seeds, and, to a lower extent, in stems and leaves.

Its subcellular location is the nucleus. The protein resides in the cytoplasm. Component of the protein complex eIF4F, which is involved in the recognition of the mRNA cap, ATP-dependent unwinding of 5'-terminal secondary structure and recruitment of mRNA to the ribosome. Recognizes and binds the 7-methylguanosine-containing mRNA cap during an early step in the initiation of protein synthesis and facilitates ribosome binding by inducing the unwinding of the mRNAs secondary structures. Key component of recessive resistance to potyviruses (e.g. soybean mosaic virus (SMV), bean common mosaic virus (BCMV) and watermelon mosaic virus (WMV), but not bean pod mottle virus (BPMV)). In terms of biological role, (Microbial infection) Susceptibility host factor required for viral infection by recruiting viral RNAs to the host ribosomal complex via an interaction with viral genome-linked protein (VPg). The protein is Eukaryotic translation initiation factor 4E-1 of Glycine max (Soybean).